Consider the following 318-residue polypeptide: tRNA(Ile)-lysidine synthase (318 aa).

26-31 (SGGADS) provides a ligand contact to ATP.

Belongs to the tRNA(Ile)-lysidine synthase family.

Its subcellular location is the cytoplasm. It catalyses the reaction cytidine(34) in tRNA(Ile2) + L-lysine + ATP = lysidine(34) in tRNA(Ile2) + AMP + diphosphate + H(+). In terms of biological role, ligates lysine onto the cytidine present at position 34 of the AUA codon-specific tRNA(Ile) that contains the anticodon CAU, in an ATP-dependent manner. Cytidine is converted to lysidine, thus changing the amino acid specificity of the tRNA from methionine to isoleucine. This Nocardia farcinica (strain IFM 10152) protein is tRNA(Ile)-lysidine synthase.